The sequence spans 556 residues: Adenine deaminase (556 aa).

The protein belongs to the metallo-dependent hydrolases superfamily. Adenine deaminase family. Mn(2+) serves as cofactor.

It carries out the reaction adenine + H2O + H(+) = hypoxanthine + NH4(+). This is Adenine deaminase from Archaeoglobus fulgidus (strain ATCC 49558 / DSM 4304 / JCM 9628 / NBRC 100126 / VC-16).